Here is a 396-residue protein sequence, read N- to C-terminus: Ornithine aminotransferase (396 aa).

K255 is subject to N6-(pyridoxal phosphate)lysine.

Belongs to the class-III pyridoxal-phosphate-dependent aminotransferase family. OAT subfamily. The cofactor is pyridoxal 5'-phosphate.

It localises to the cytoplasm. The catalysed reaction is a 2-oxocarboxylate + L-ornithine = L-glutamate 5-semialdehyde + an L-alpha-amino acid. The protein operates within amino-acid biosynthesis; L-proline biosynthesis; L-glutamate 5-semialdehyde from L-ornithine: step 1/1. Its function is as follows. Catalyzes the interconversion of ornithine to glutamate semialdehyde. The sequence is that of Ornithine aminotransferase from Bacillus cereus (strain 03BB102).